Here is a 310-residue protein sequence, read N- to C-terminus: N-acetylmuramic acid 6-phosphate etherase (310 aa).

One can recognise an SIS domain in the interval 64–227; it reads ITSRLKSNGR…STSVMIKLGK (164 aa). Residue Glu-92 is the Proton donor of the active site. The active site involves Glu-123.

The protein belongs to the GCKR-like family. MurNAc-6-P etherase subfamily. In terms of assembly, homodimer.

The enzyme catalyses N-acetyl-D-muramate 6-phosphate + H2O = N-acetyl-D-glucosamine 6-phosphate + (R)-lactate. It functions in the pathway amino-sugar metabolism; N-acetylmuramate degradation. Functionally, specifically catalyzes the cleavage of the D-lactyl ether substituent of MurNAc 6-phosphate, producing GlcNAc 6-phosphate and D-lactate. The polypeptide is N-acetylmuramic acid 6-phosphate etherase (Prochlorococcus marinus (strain NATL2A)).